Reading from the N-terminus, the 731-residue chain is 1,4-alpha-glucan branching enzyme GlgB (731 aa).

Asp-412 serves as the catalytic Nucleophile. Catalysis depends on Glu-465, which acts as the Proton donor.

This sequence belongs to the glycosyl hydrolase 13 family. GlgB subfamily. As to quaternary structure, monomer.

The enzyme catalyses Transfers a segment of a (1-&gt;4)-alpha-D-glucan chain to a primary hydroxy group in a similar glucan chain.. It functions in the pathway glycan biosynthesis; glycogen biosynthesis. Catalyzes the formation of the alpha-1,6-glucosidic linkages in glycogen by scission of a 1,4-alpha-linked oligosaccharide from growing alpha-1,4-glucan chains and the subsequent attachment of the oligosaccharide to the alpha-1,6 position. This chain is 1,4-alpha-glucan branching enzyme GlgB, found in Bordetella pertussis (strain Tohama I / ATCC BAA-589 / NCTC 13251).